Reading from the N-terminus, the 139-residue chain is ATP synthase epsilon chain (139 aa).

Belongs to the ATPase epsilon chain family. In terms of assembly, F-type ATPases have 2 components, CF(1) - the catalytic core - and CF(0) - the membrane proton channel. CF(1) has five subunits: alpha(3), beta(3), gamma(1), delta(1), epsilon(1). CF(0) has three main subunits: a, b and c.

It localises to the cell inner membrane. Its function is as follows. Produces ATP from ADP in the presence of a proton gradient across the membrane. This Erwinia tasmaniensis (strain DSM 17950 / CFBP 7177 / CIP 109463 / NCPPB 4357 / Et1/99) protein is ATP synthase epsilon chain.